The primary structure comprises 402 residues: Propionate kinase (402 aa).

ATP contacts are provided by Asn11 and Lys18. Asn11 is a Mg(2+) binding site. Substrate is bound at residue Arg86. Asp143 serves as the catalytic Proton donor/acceptor. Residues His175, 203–207, 278–280, and 326–330 contribute to the ATP site; these read HLGNG, DLR, and GIGEN.

The protein belongs to the acetokinase family. TdcD subfamily. Homodimer. Mg(2+) serves as cofactor.

It carries out the reaction propanoate + ATP = propanoyl phosphate + ADP. It participates in amino-acid degradation; L-threonine degradation via propanoate pathway; propanoate from L-threonine: step 4/4. Its function is as follows. Catalyzes the conversion of propionyl phosphate and ADP to propionate and ATP. This is Propionate kinase from Salmonella agona (strain SL483).